Consider the following 134-residue polypeptide: MRFSIFSTLLVSLATLSTAAELGIEKTHEVECTRKTVKGDTVQMHYKGTLQSDGSEFDSSYKRNSPLKFKVGSGMVIKGWDEGLLDMCIGEKRTLTIPPEYGYGSRGVGPIPGGATLIFETELVGIDGVSKDEL.

Positions 1–19 (MRFSIFSTLLVSLATLSTA) are cleaved as a signal peptide. Residues 39–127 (GDTVQMHYKG…IFETELVGID (89 aa)) enclose the PPIase FKBP-type domain. Residues 131 to 134 (KDEL) carry the Prevents secretion from ER motif.

Belongs to the FKBP-type PPIase family. FKBP2 subfamily.

Its subcellular location is the endoplasmic reticulum. The enzyme catalyses [protein]-peptidylproline (omega=180) = [protein]-peptidylproline (omega=0). Inhibited by both FK506 and rapamycin. Functionally, PPIases accelerate the folding of proteins. It catalyzes the cis-trans isomerization of proline imidic peptide bonds in oligopeptides. This Aspergillus oryzae (strain ATCC 42149 / RIB 40) (Yellow koji mold) protein is FK506-binding protein 2 (fpr2).